The sequence spans 363 residues: Probable aminomethyltransferase (363 aa).

It belongs to the GcvT family. As to quaternary structure, the glycine cleavage system is composed of four proteins: P, T, L and H.

The catalysed reaction is N(6)-[(R)-S(8)-aminomethyldihydrolipoyl]-L-lysyl-[protein] + (6S)-5,6,7,8-tetrahydrofolate = N(6)-[(R)-dihydrolipoyl]-L-lysyl-[protein] + (6R)-5,10-methylene-5,6,7,8-tetrahydrofolate + NH4(+). Its function is as follows. The glycine cleavage system catalyzes the degradation of glycine. The protein is Probable aminomethyltransferase of Halobacterium salinarum (strain ATCC 29341 / DSM 671 / R1).